A 247-amino-acid chain; its full sequence is Ribonuclease PH (247 aa).

Residues arginine 96 and 134 to 136 each bind phosphate; that span reads GTR.

It belongs to the RNase PH family. In terms of assembly, homohexameric ring arranged as a trimer of dimers.

It catalyses the reaction tRNA(n+1) + phosphate = tRNA(n) + a ribonucleoside 5'-diphosphate. In terms of biological role, phosphorolytic 3'-5' exoribonuclease that plays an important role in tRNA 3'-end maturation. Removes nucleotide residues following the 3'-CCA terminus of tRNAs; can also add nucleotides to the ends of RNA molecules by using nucleoside diphosphates as substrates, but this may not be physiologically important. Probably plays a role in initiation of 16S rRNA degradation (leading to ribosome degradation) during starvation. The chain is Ribonuclease PH from Tropheryma whipplei (strain TW08/27) (Whipple's bacillus).